A 347-amino-acid chain; its full sequence is UDP-N-acetylenolpyruvoylglucosamine reductase (347 aa).

Residues 16–187 (AIEQCSHYLV…IAVGLKLPKT (172 aa)) enclose the FAD-binding PCMH-type domain. Residue R163 is part of the active site. Residue S233 is the Proton donor of the active site. E328 is a catalytic residue.

This sequence belongs to the MurB family. It depends on FAD as a cofactor.

It localises to the cytoplasm. The catalysed reaction is UDP-N-acetyl-alpha-D-muramate + NADP(+) = UDP-N-acetyl-3-O-(1-carboxyvinyl)-alpha-D-glucosamine + NADPH + H(+). Its pathway is cell wall biogenesis; peptidoglycan biosynthesis. Cell wall formation. This Vibrio vulnificus (strain CMCP6) protein is UDP-N-acetylenolpyruvoylglucosamine reductase.